The sequence spans 211 residues: MGLVFLGPPGSGKGTISKIISNEFKYQHISTGDLFRENILNSTALGQEIKKIVERGELVPDLITIKIVEDKIKAIKKNKDFILDGFPRNICQAEALDKFLPNVKIINFLIDEELVIKRLSGRRICKSCNNIFNIYTLTTKKNGICDVCGGDLYQREDDKEECLKTRLKEYKLQTKPLIEFYSKCSRLNNVDASVKIDEIKKKIIKIMLKKN.

10 to 15 lines the ATP pocket; the sequence is GSGKGT. An NMP region spans residues 30–59; sequence STGDLFRENILNSTALGQEIKKIVERGELV. Residues T31, R36, 57-59, 85-88, and Q92 contribute to the AMP site; these read ELV and GFPR. Positions 121-158 are LID; it reads GRRICKSCNNIFNIYTLTTKKNGICDVCGGDLYQREDD. R122 provides a ligand contact to ATP. Zn(2+) is bound by residues C125 and C128. 131–132 serves as a coordination point for ATP; it reads IF. 2 residues coordinate Zn(2+): C145 and C148. R155 and R166 together coordinate AMP. V194 provides a ligand contact to ATP.

Belongs to the adenylate kinase family. As to quaternary structure, monomer.

It is found in the cytoplasm. The enzyme catalyses AMP + ATP = 2 ADP. Its pathway is purine metabolism; AMP biosynthesis via salvage pathway; AMP from ADP: step 1/1. In terms of biological role, catalyzes the reversible transfer of the terminal phosphate group between ATP and AMP. Plays an important role in cellular energy homeostasis and in adenine nucleotide metabolism. In Borreliella burgdorferi (strain ATCC 35210 / DSM 4680 / CIP 102532 / B31) (Borrelia burgdorferi), this protein is Adenylate kinase.